The chain runs to 279 residues: Protein FAM151B (279 aa).

The protein belongs to the menorin family.

Essential for survival of retinal photoreceptor cells. The polypeptide is Protein FAM151B (Fam151b) (Mus musculus (Mouse)).